The primary structure comprises 602 residues: Proline--tRNA ligase (602 aa).

It belongs to the class-II aminoacyl-tRNA synthetase family. ProS type 1 subfamily. As to quaternary structure, homodimer.

The protein resides in the cytoplasm. The enzyme catalyses tRNA(Pro) + L-proline + ATP = L-prolyl-tRNA(Pro) + AMP + diphosphate. Functionally, catalyzes the attachment of proline to tRNA(Pro) in a two-step reaction: proline is first activated by ATP to form Pro-AMP and then transferred to the acceptor end of tRNA(Pro). As ProRS can inadvertently accommodate and process non-cognate amino acids such as alanine and cysteine, to avoid such errors it has two additional distinct editing activities against alanine. One activity is designated as 'pretransfer' editing and involves the tRNA(Pro)-independent hydrolysis of activated Ala-AMP. The other activity is designated 'posttransfer' editing and involves deacylation of mischarged Ala-tRNA(Pro). The misacylated Cys-tRNA(Pro) is not edited by ProRS. The protein is Proline--tRNA ligase of Thermosynechococcus vestitus (strain NIES-2133 / IAM M-273 / BP-1).